The following is a 204-amino-acid chain: Holliday junction branch migration complex subunit RuvA (204 aa).

Residues 1-64 form a domain I region; that stretch reads MIGRLRGIIL…EDAQLLYGFN (64 aa). The tract at residues 65-142 is domain II; that stretch reads NKQERALFRE…KGLNGDLFNN (78 aa). A flexible linker region spans residues 143–155; it reads TGDISLPTASPQT. A domain III region spans residues 156–204; that stretch reads SDADIEAEAASALVALGYKPQEASRLVSKIAKPGADCETLIRDALRAAL.

This sequence belongs to the RuvA family. Homotetramer. Forms an RuvA(8)-RuvB(12)-Holliday junction (HJ) complex. HJ DNA is sandwiched between 2 RuvA tetramers; dsDNA enters through RuvA and exits via RuvB. An RuvB hexamer assembles on each DNA strand where it exits the tetramer. Each RuvB hexamer is contacted by two RuvA subunits (via domain III) on 2 adjacent RuvB subunits; this complex drives branch migration. In the full resolvosome a probable DNA-RuvA(4)-RuvB(12)-RuvC(2) complex forms which resolves the HJ.

It is found in the cytoplasm. In terms of biological role, the RuvA-RuvB-RuvC complex processes Holliday junction (HJ) DNA during genetic recombination and DNA repair, while the RuvA-RuvB complex plays an important role in the rescue of blocked DNA replication forks via replication fork reversal (RFR). RuvA specifically binds to HJ cruciform DNA, conferring on it an open structure. The RuvB hexamer acts as an ATP-dependent pump, pulling dsDNA into and through the RuvAB complex. HJ branch migration allows RuvC to scan DNA until it finds its consensus sequence, where it cleaves and resolves the cruciform DNA. This is Holliday junction branch migration complex subunit RuvA from Yersinia pseudotuberculosis serotype O:1b (strain IP 31758).